The chain runs to 168 residues: S-ribosylhomocysteine lyase (168 aa).

Positions 54, 58, and 128 each coordinate Fe cation.

It belongs to the LuxS family. Homodimer. Requires Fe cation as cofactor.

The catalysed reaction is S-(5-deoxy-D-ribos-5-yl)-L-homocysteine = (S)-4,5-dihydroxypentane-2,3-dione + L-homocysteine. Functionally, involved in the synthesis of autoinducer 2 (AI-2) which is secreted by bacteria and is used to communicate both the cell density and the metabolic potential of the environment. The regulation of gene expression in response to changes in cell density is called quorum sensing. Catalyzes the transformation of S-ribosylhomocysteine (RHC) to homocysteine (HC) and 4,5-dihydroxy-2,3-pentadione (DPD). This Neisseria meningitidis serogroup A / serotype 4A (strain DSM 15465 / Z2491) protein is S-ribosylhomocysteine lyase.